The sequence spans 141 residues: Acetyltransferase YpeA (141 aa).

One can recognise an N-acetyltransferase domain in the interval 1–141 (MEIRVFRQED…GKRLIEDEEY (141 aa)).

Belongs to the acetyltransferase family. YpeA subfamily.

The chain is Acetyltransferase YpeA from Salmonella choleraesuis (strain SC-B67).